Reading from the N-terminus, the 277-residue chain is Ribosomally synthesized cyclic peptide asperipin-2a precursor aprA (277 aa).

The signal sequence occupies residues 1 to 19 (MHLSRYIAVLLSASSFVSA). 12 propeptides span residues 20–69 (LPLQ…LDKR), 76–88 (KRNA…LDKR), 95–107 (KRNA…LDKR), 114–126 (KRNA…LDKR), 133–145 (KRNA…LDKR), 152–164 (KRNA…LDKR), 171–183 (KRNA…LDKR), 190–202 (KRNA…LDKR), 209–221 (KRNA…LDKR), 228–240 (KRNA…LDKR), 247–259 (KRNA…LDKR), and 266–277 (KRNAETPEDLDK).

In terms of processing, aprA is processed by kexin proteases to produce 11 identical copies of the hexapeptide Phe-Tyr-Tyr-Thr-Gly-Tyr, that is further modified aprY and aprR to yield asperipin-2a. The bicyclic structure of asperipin-2a is likely synthesized by the single ustYa family oxidase aprY. The reductase aprR may be required for the final reduction to yield asperipin-2a.

Its pathway is secondary metabolite biosynthesis. Ribosomally synthesized cyclic peptide asperipin-2a precursor; part of the gene cluster that mediates the biosynthesis of the asperipin-2a, a bicyclic peptide that possesses two macrocyclic ether rings consisting of 14- and 17-membered paracyclophans. The aprA translated product contains a 11-fold repeated peptide embedding the hexapeptide Phe-Tyr-Tyr-Thr-Gly-Tyr, that is converted into asperipin-2a. After being excised from the precursor peptide by kexin proteases, the core peptides are cyclized and modified post-translationally by enzymes encoded within the corresponding gene cluster. This Aspergillus flavus (strain ATCC 200026 / FGSC A1120 / IAM 13836 / NRRL 3357 / JCM 12722 / SRRC 167) protein is Ribosomally synthesized cyclic peptide asperipin-2a precursor aprA.